The primary structure comprises 179 residues: MQRQNFRPPTPPYPGPGGGGWGSGSSFRGTPGGGGPRPPSPRDGYGSPHHTPPYGPRSRPYGSSHSPRHGGSFPGGRFGSPSPGGYPGSYSRSPAGSQQQFGYSPGQQQTHPQGSPRTSTPFGSGRVREKRMSNELENYFKPSMLEDPWAGLEPVSVVDISQQYSNTQTFTGKKGRYFC.

A disordered region spans residues M1–E135. R37 is modified (asymmetric dimethylarginine). Phosphoserine is present on residues S40 and S47. T51 carries the phosphothreonine modification. Omega-N-methylarginine is present on R57. 2 positions are modified to asymmetric dimethylarginine: R59 and R68. The span at P60 to G71 shows a compositional bias: low complexity. S72 carries the phosphoserine modification. An Asymmetric dimethylarginine modification is found at R77. Positions G79 to Q109 are enriched in low complexity. S80, S82, S93, S104, and S115 each carry phosphoserine. Over residues T110–F122 the composition is skewed to polar residues. R117 carries the post-translational modification Omega-N-methylarginine. T120 is subject to Phosphothreonine. S124 and S133 each carry phosphoserine.

Interacts with PLK1; phosphorylation-dependent. Phosphorylated during mitosis in the cell cycle probably by CDK1. Expressed at highest levels in liver and kidney; intermediate expression in skeletal muscle, pancreas, heart and placenta; low expression in brain and lung. Expressed in epidermis and hair follicles.

The protein localises to the nucleus. It is found in the cytoplasm. Its subcellular location is the cytoskeleton. The protein resides in the microtubule organizing center. It localises to the centrosome. May play a role in maintenance of cell cycle integrity by regulating mitosis or cytokinesis. The protein is M-phase-specific PLK1-interacting protein (MPLKIP) of Homo sapiens (Human).